Reading from the N-terminus, the 691-residue chain is DNA-directed RNA polymerase subunit beta' (691 aa).

It belongs to the RNA polymerase beta' chain family. RpoC1 subfamily. In terms of assembly, in plastids the minimal PEP RNA polymerase catalytic core is composed of four subunits: alpha, beta, beta', and beta''. When a (nuclear-encoded) sigma factor is associated with the core the holoenzyme is formed, which can initiate transcription.

The protein resides in the plastid. The enzyme catalyses RNA(n) + a ribonucleoside 5'-triphosphate = RNA(n+1) + diphosphate. DNA-dependent RNA polymerase catalyzes the transcription of DNA into RNA using the four ribonucleoside triphosphates as substrates. This chain is DNA-directed RNA polymerase subunit beta' (rpoC1), found in Cuscuta reflexa (Southern Asian dodder).